We begin with the raw amino-acid sequence, 414 residues long: Histidine--tRNA ligase (414 aa).

The protein belongs to the class-II aminoacyl-tRNA synthetase family. In terms of assembly, homodimer.

It localises to the cytoplasm. It catalyses the reaction tRNA(His) + L-histidine + ATP = L-histidyl-tRNA(His) + AMP + diphosphate + H(+). The chain is Histidine--tRNA ligase from Solibacter usitatus (strain Ellin6076).